A 510-amino-acid polypeptide reads, in one-letter code: GMP synthase [glutamine-hydrolyzing] (510 aa).

The 191-residue stretch at 5–195 (LVLVVDFGGQ…LFNVCNLKGD (191 aa)) folds into the Glutamine amidotransferase type-1 domain. The Nucleophile role is filled by C82. Residues H169 and E171 contribute to the active site. Residues 196-385 (WSMSSFAEQQ…LGIPHKLVWR (190 aa)) enclose the GMPS ATP-PPase domain. 223–229 (SGGVDSS) lines the ATP pocket.

In terms of assembly, homodimer.

The enzyme catalyses XMP + L-glutamine + ATP + H2O = GMP + L-glutamate + AMP + diphosphate + 2 H(+). The protein operates within purine metabolism; GMP biosynthesis; GMP from XMP (L-Gln route): step 1/1. Catalyzes the synthesis of GMP from XMP. The chain is GMP synthase [glutamine-hydrolyzing] from Clostridium botulinum (strain Loch Maree / Type A3).